The chain runs to 460 residues: MTNYAIILAAGKGTRMTSDLPKVLHKVSGLTMLEHVFRSVKAISPEKSVTVIGHKSEMVRAVLADQSAFVHQTEQLGTGHAVMMAETQLEGLEGHTLVIAGDTPLITGESLKSLIDFHVNHKNVATILTATAQDPFGYGRIVRNKDGEVIKIVEQKDANEYEQQLKEINTGTYVFDNKRLFEALKCITTNNAQGEYYLTDVVAIFRANKEKVGAYILRDFNESLGVNDRVALAIAETVMRQRITQKHMVNGVTFQNPETVYIESDVEIAPDVLIEGNVTLKGRTHIGSGTVLTNGTYIVDSEIGDNCVVTNSMIESSVLAAGVTVGPYAHLRPGTTLDREVHIGNFVEVKGSHIGEKTKAGHLTYIGNAQVGSSVNVGAGTITVNYDGQNKYETVIGDHAFIGSNSTLIAPLEVGDHALTAAGSTISKTVPIDSIAIGRSRQVTKEGYAKRLAHHPSRSK.

The pyrophosphorylase stretch occupies residues 1 to 229 (MTNYAIILAA…FNESLGVNDR (229 aa)). Residues 8–11 (LAAG), Lys-22, Gln-72, and 77–78 (GT) each bind UDP-N-acetyl-alpha-D-glucosamine. Asp-102 is a binding site for Mg(2+). UDP-N-acetyl-alpha-D-glucosamine-binding residues include Gly-139, Glu-154, Asn-169, and Asn-227. Asn-227 serves as a coordination point for Mg(2+). Residues 230–250 (VALAIAETVMRQRITQKHMVN) form a linker region. Residues 251 to 460 (GVTFQNPETV…RLAHHPSRSK (210 aa)) form an N-acetyltransferase region. UDP-N-acetyl-alpha-D-glucosamine is bound by residues Arg-332 and Lys-350. The active-site Proton acceptor is His-362. Residues Tyr-365 and Asn-376 each contribute to the UDP-N-acetyl-alpha-D-glucosamine site. Residues Ala-379, 385-386 (NY), Ser-404, Ala-422, and Arg-439 each bind acetyl-CoA.

In the N-terminal section; belongs to the N-acetylglucosamine-1-phosphate uridyltransferase family. The protein in the C-terminal section; belongs to the transferase hexapeptide repeat family. Homotrimer. Mg(2+) is required as a cofactor.

It localises to the cytoplasm. It carries out the reaction alpha-D-glucosamine 1-phosphate + acetyl-CoA = N-acetyl-alpha-D-glucosamine 1-phosphate + CoA + H(+). The enzyme catalyses N-acetyl-alpha-D-glucosamine 1-phosphate + UTP + H(+) = UDP-N-acetyl-alpha-D-glucosamine + diphosphate. Its pathway is nucleotide-sugar biosynthesis; UDP-N-acetyl-alpha-D-glucosamine biosynthesis; N-acetyl-alpha-D-glucosamine 1-phosphate from alpha-D-glucosamine 6-phosphate (route II): step 2/2. It participates in nucleotide-sugar biosynthesis; UDP-N-acetyl-alpha-D-glucosamine biosynthesis; UDP-N-acetyl-alpha-D-glucosamine from N-acetyl-alpha-D-glucosamine 1-phosphate: step 1/1. The protein operates within bacterial outer membrane biogenesis; LPS lipid A biosynthesis. Its function is as follows. Catalyzes the last two sequential reactions in the de novo biosynthetic pathway for UDP-N-acetylglucosamine (UDP-GlcNAc). The C-terminal domain catalyzes the transfer of acetyl group from acetyl coenzyme A to glucosamine-1-phosphate (GlcN-1-P) to produce N-acetylglucosamine-1-phosphate (GlcNAc-1-P), which is converted into UDP-GlcNAc by the transfer of uridine 5-monophosphate (from uridine 5-triphosphate), a reaction catalyzed by the N-terminal domain. The sequence is that of Bifunctional protein GlmU from Streptococcus pyogenes serotype M1.